Consider the following 718-residue polypeptide: Sodium/myo-inositol cotransporter (718 aa).

Residues 1-9 (MRAVLETAD) are Extracellular-facing. Residues 10–29 (IAIVALYFILVMCIGFFAMW) form a helical membrane-spanning segment. At 30–38 (KSNRSTVSG) the chain is on the cytoplasmic side. A helical membrane pass occupies residues 39 to 57 (YFLAGRSMTWVAIGASLFV). The Extracellular portion of the chain corresponds to 58–86 (SNIGSEHFIGLAGSGAASGFAVGAWEFNA). The chain crosses the membrane as a helical span at residues 87–110 (LLLLQLLGWVFIPIYIRSGVYTMP). The Cytoplasmic segment spans residues 111 to 123 (EYLSKRFGGHRIQ). A helical transmembrane segment spans residues 124–144 (VYFAALSLILYIFTKLSVDLY). The Extracellular portion of the chain corresponds to 145–157 (SGALFIQESMGWN). A helical membrane pass occupies residues 158–183 (LYVSVILLIGMTALLTVTGGLVAVIY). At 184–186 (TDT) the chain is on the cytoplasmic side. A helical membrane pass occupies residues 187–205 (LQALLMIVGALTLMVISMM). The Extracellular portion of the chain corresponds to 206 to 303 (EIGGFEEVKR…HAKGSTLMAG (98 aa)). N-linked (GlcNAc...) asparagine glycosylation occurs at N232. Residues 304 to 324 (FLKLLPMFIIVVPGMISRILF) traverse the membrane as a helical segment. Residues 325-353 (ADDIACINPEHCMQVCGSRAGCSNIAYPR) are Cytoplasmic-facing. The chain crosses the membrane as a helical span at residues 354 to 376 (LVMKLVPVGLRGLMMAVMIAALM). Residues 377-406 (SDLDSIFNSASTIFTLDVYKLIRKSASSRE) lie on the Extracellular side of the membrane. A helical membrane pass occupies residues 407–430 (LMIVGRIFVAFMVVISIAWVPIIV). Residues 431 to 443 (EMQGGQMYLYIQE) are Cytoplasmic-facing. A helical transmembrane segment spans residues 444-462 (VADYLTPPVAALFLLAIFW). Residues 463 to 510 (KRCNEQGAFYGGMAGFILVVVRLTLAFAYRAPECDQPDNRPVFIKDIH) lie on the Extracellular side of the membrane. Residues 511 to 532 (YMYVATALFWITGLITVIVSLL) form a helical membrane-spanning segment. Residues 533–695 (TPPPTKEQIR…QMLEEPPQVK (163 aa)) are Cytoplasmic-facing. A phosphoserine mark is found at S594 and S632. Residues 696 to 716 (VILNIGLFGVCSLGIFMFVYF) form a helical membrane-spanning segment. At 717 to 718 (SL) the chain is on the extracellular side.

Belongs to the sodium:solute symporter (SSF) (TC 2.A.21) family. Interacts with KCNQ2 (via the pore module). Interacts with KCNQ1; this interaction is direct. Forms coregulatory complexes with ion channels KCNQ2-KCNQ3 and KCNQ1-KCNE2.

Its subcellular location is the apical cell membrane. It localises to the basolateral cell membrane. Electrogenic Na(+)-coupled sugar symporter that actively transports myo-inositol and its stereoisomer scyllo-inositol across the plasma membrane, with a Na(+) to sugar coupling ratio of 2:1. Maintains myo-inositol concentration gradient that defines cell volume and fluid balance during osmotic stress, in particular in the fetoplacental unit and central nervous system. Forms coregulatory complexes with voltage-gated K(+) ion channels, allosterically altering ion selectivity, voltage dependence and gating kinetics of the channel. In turn, K(+) efflux through the channel forms a local electrical gradient that modulates electrogenic Na(+)-coupled myo-inositol influx through the transporter. Associates with KCNQ1-KCNE2 channel in the apical membrane of choroid plexus epithelium and regulates the myo-inositol gradient between blood and cerebrospinal fluid with an impact on neuron excitability. Associates with KCNQ2-KCNQ3 channel altering ion selectivity, increasing Na(+) and Cs(+) permeation relative to K(+) permeation. Provides myo-inositol precursor for biosynthesis of phosphoinositides such as PI(4,5)P2, thus indirectly affecting the activity of phosphoinositide-dependent ion channels and Ca(2+) signaling upon osmotic stress. This chain is Sodium/myo-inositol cotransporter (SLC5A3), found in Bos taurus (Bovine).